A 358-amino-acid polypeptide reads, in one-letter code: uncharacterized protein (358 aa).

One can recognise an EF-hand domain in the interval 229-264; it reads KQLHEFKLAFDYFDQEKNGWLDYEHFELCLKSQGYN. Ca(2+)-binding residues include Asp242, Asn246, Trp248, and His253.

This is an uncharacterized protein from Caenorhabditis elegans.